Consider the following 263-residue polypeptide: Oxygen-evolving enhancer protein 2-1, chloroplastic (263 aa).

The residue at position 153 (S153) is a Phosphoserine.

This sequence belongs to the PsbP family. Interacts with WAK1.

It localises to the plastid. The protein resides in the chloroplast thylakoid lumen. Functionally, may be involved in the regulation of photosystem II. This is Oxygen-evolving enhancer protein 2-1, chloroplastic (PSBP1) from Arabidopsis thaliana (Mouse-ear cress).